A 727-amino-acid chain; its full sequence is Catalase-peroxidase (727 aa).

The tryptophyl-tyrosyl-methioninium (Trp-Tyr) (with M-244) cross-link spans 95–218 (WHSAGTYRII…LAAVQMGLIY (124 aa)). Catalysis depends on H96, which acts as the Proton acceptor. A cross-link (tryptophyl-tyrosyl-methioninium (Tyr-Met) (with W-95)) is located at residues 218 to 244 (YVNPEGPNGEPDVLGAAKDIKESFGKM). Residue H259 participates in heme b binding.

Belongs to the peroxidase family. Peroxidase/catalase subfamily. Homodimer or homotetramer. Requires heme b as cofactor. Formation of the three residue Trp-Tyr-Met cross-link is important for the catalase, but not the peroxidase activity of the enzyme.

The enzyme catalyses H2O2 + AH2 = A + 2 H2O. It catalyses the reaction 2 H2O2 = O2 + 2 H2O. Its function is as follows. Bifunctional enzyme with both catalase and broad-spectrum peroxidase activity. This Persephonella marina (strain DSM 14350 / EX-H1) protein is Catalase-peroxidase.